A 227-amino-acid chain; its full sequence is Cytochrome c oxidase subunit 2 (227 aa).

Residues 1 to 26 (MNTWMNFNLQNSNSPLMEQLMFFHNH) lie on the Mitochondrial intermembrane side of the membrane. Residues 27 to 48 (SMLIILLITILVGYIMSSLLYN) form a helical membrane-spanning segment. Topologically, residues 49–62 (KLYNRYLLESQNVE) are mitochondrial matrix. The chain crosses the membrane as a helical span at residues 63-82 (IIWTILPAFMLIFIALPSLR). Residues 83 to 227 (LLYLLDDSNS…SFIKWISSNS (145 aa)) lie on the Mitochondrial intermembrane side of the membrane. Cu cation is bound by residues His-161, Cys-196, Glu-198, Cys-200, His-204, and Met-207. Glu-198 serves as a coordination point for Mg(2+).

It belongs to the cytochrome c oxidase subunit 2 family. Component of the cytochrome c oxidase (complex IV, CIV), a multisubunit enzyme composed of a catalytic core of 3 subunits and several supernumerary subunits. The complex exists as a monomer or a dimer and forms supercomplexes (SCs) in the inner mitochondrial membrane with ubiquinol-cytochrome c oxidoreductase (cytochrome b-c1 complex, complex III, CIII). Cu cation is required as a cofactor.

The protein resides in the mitochondrion inner membrane. The catalysed reaction is 4 Fe(II)-[cytochrome c] + O2 + 8 H(+)(in) = 4 Fe(III)-[cytochrome c] + 2 H2O + 4 H(+)(out). Its function is as follows. Component of the cytochrome c oxidase, the last enzyme in the mitochondrial electron transport chain which drives oxidative phosphorylation. The respiratory chain contains 3 multisubunit complexes succinate dehydrogenase (complex II, CII), ubiquinol-cytochrome c oxidoreductase (cytochrome b-c1 complex, complex III, CIII) and cytochrome c oxidase (complex IV, CIV), that cooperate to transfer electrons derived from NADH and succinate to molecular oxygen, creating an electrochemical gradient over the inner membrane that drives transmembrane transport and the ATP synthase. Cytochrome c oxidase is the component of the respiratory chain that catalyzes the reduction of oxygen to water. Electrons originating from reduced cytochrome c in the intermembrane space (IMS) are transferred via the dinuclear copper A center (CU(A)) of subunit 2 and heme A of subunit 1 to the active site in subunit 1, a binuclear center (BNC) formed by heme A3 and copper B (CU(B)). The BNC reduces molecular oxygen to 2 water molecules using 4 electrons from cytochrome c in the IMS and 4 protons from the mitochondrial matrix. The sequence is that of Cytochrome c oxidase subunit 2 (COII) from Ctenocephalides felis (Cat flea).